The primary structure comprises 91 residues: Probable translocation protein y4yM (91 aa).

Helical transmembrane passes span 15 to 35 (VVFM…GLTI) and 55 to 75 (LLVV…PLIE).

Belongs to the FliQ/MopD/SpaQ family.

It localises to the cell membrane. Functionally, could be involved in the secretion of an unknown factor. This is Probable translocation protein y4yM from Sinorhizobium fredii (strain NBRC 101917 / NGR234).